Here is a 174-residue protein sequence, read N- to C-terminus: 3-hydroxydecanoyl-[acyl-carrier-protein] dehydratase (174 aa).

His-73 is a catalytic residue.

Belongs to the thioester dehydratase family. FabA subfamily. As to quaternary structure, homodimer.

The protein resides in the cytoplasm. It catalyses the reaction a (3R)-hydroxyacyl-[ACP] = a (2E)-enoyl-[ACP] + H2O. The catalysed reaction is (3R)-hydroxydecanoyl-[ACP] = (2E)-decenoyl-[ACP] + H2O. It carries out the reaction (2E)-decenoyl-[ACP] = (3Z)-decenoyl-[ACP]. It functions in the pathway lipid metabolism; fatty acid biosynthesis. Functionally, necessary for the introduction of cis unsaturation into fatty acids. Catalyzes the dehydration of (3R)-3-hydroxydecanoyl-ACP to E-(2)-decenoyl-ACP and then its isomerization to Z-(3)-decenoyl-ACP. Can catalyze the dehydratase reaction for beta-hydroxyacyl-ACPs with saturated chain lengths up to 16:0, being most active on intermediate chain length. This chain is 3-hydroxydecanoyl-[acyl-carrier-protein] dehydratase, found in Saccharophagus degradans (strain 2-40 / ATCC 43961 / DSM 17024).